The primary structure comprises 884 residues: Telomerase reverse transcriptase (884 aa).

A Reverse transcriptase domain is found at 422 to 725 (CRNHNSYTLS…TVIQFCAMHI (304 aa)). The Mg(2+) site is built by Asp-530, Asp-670, and Asp-671.

Belongs to the reverse transcriptase family. Telomerase subfamily. Catalytic subunit of the telomerase holoenzyme complex composed minimally of EST2 and the telomerase RNA template component.

The protein localises to the nucleus. The protein resides in the chromosome. It localises to the telomere. The enzyme catalyses DNA(n) + a 2'-deoxyribonucleoside 5'-triphosphate = DNA(n+1) + diphosphate. Its function is as follows. Telomerase is a ribonucleoprotein enzyme essential for the replication of chromosome termini in most eukaryotes. It elongates telomeres. It is a reverse transcriptase that adds simple sequence repeats to chromosome ends by copying a template sequence within the RNA component of the enzyme. This is Telomerase reverse transcriptase (EST2) from Saccharomyces cerevisiae (strain ATCC 204508 / S288c) (Baker's yeast).